Here is a 693-residue protein sequence, read N- to C-terminus: Adhesion G-protein coupled receptor G1 (693 aa).

The first 25 residues, 1–25 (MTPQSLLQTTLFLLSLLFLVQGAHG), serve as a signal peptide directing secretion. 26-33 (RGHREDFR) serves as a coordination point for heparin. Residues 26-401 (RGHREDFRFC…SVEVDAVHKH (376 aa)) are Extracellular-facing. Cystine bridges form between cysteine 35-cysteine 91 and cysteine 121-cysteine 177. Asparagine 39, asparagine 148, and asparagine 171 each carry an N-linked (GlcNAc...) asparagine glycan. Residue 190-200 (LKHPQKASRRP) coordinates heparin. In terms of domain architecture, GAIN-B spans 224 to 395 (DMVSFEEDRI…AVLMVSSVEV (172 aa)). 4 N-linked (GlcNAc...) asparagine glycosylation sites follow: asparagine 234, asparagine 303, asparagine 324, and asparagine 341. 2 cysteine pairs are disulfide-bonded: cysteine 346–cysteine 377 and cysteine 366–cysteine 379. The segment at 346 to 395 (CVFWVEDPTLSSPGHWSSAGCETVRRETQTSCFCNHLTYFAVLMVSSVEV) is GPS. The tract at residues 384–397 (YFAVLMVSSVEVDA) is stachel. A helical membrane pass occupies residues 402–424 (YLSLLSYVGCVVSALACLVTIAA). Residues 425–437 (YLCSRVPLPCRRK) are Cytoplasmic-facing. Residues 438-460 (PRDYTIKVHMNLLLAVFLLDTSF) form a helical membrane-spanning segment. At 461–465 (LLSEP) the chain is on the extracellular side. Residues 466–495 (VALTGSEAGCRASAIFLHFSLLTCLSWMGL) form a helical membrane-spanning segment. Cysteine 475 and cysteine 562 are disulfide-bonded. Residues 496-510 (EGYNLYRLVVEVFGT) are Cytoplasmic-facing. A helical membrane pass occupies residues 511 to 533 (YVPGYLLKLSAMGWGFPIFLVTL). Topologically, residues 534 to 562 (VALVDVDNYGPIILAVHRTPEGVIYPSMC) are extracellular. The helical transmembrane segment at 563-588 (WIRDSLVSYITNLGLFSLVFLFNMAM) threads the bilayer. The Cytoplasmic portion of the chain corresponds to 589 to 602 (LATMVVQILRLRPH). A helical transmembrane segment spans residues 603 to 624 (TQKWSHVLTLLGLSLVLGLPWA). At 625 to 628 (LIFF) the chain is on the extracellular side. Residues 629–654 (SFASGTFQLVVLYLFSIITSFQGFLI) form a helical membrane-spanning segment. Topologically, residues 655–693 (FIWYWSMRLQARGGPSPLKSNSDSARLPISSGSTSSSRI) are cytoplasmic. The disordered stretch occupies residues 670-693 (SPLKSNSDSARLPISSGSTSSSRI). Residues 684 to 693 (SSGSTSSSRI) show a composition bias toward low complexity.

This sequence belongs to the G-protein coupled receptor 2 family. LN-TM7 subfamily. Heterodimer of 2 chains generated by proteolytic processing; the large extracellular N-terminal fragment (ADGRG1 NT) and the membrane-bound C-terminal fragment (ADGRG1-CT) predominantly remain associated and non-covalently linked. ADGRG1 NT self-associates in a trans-trans manner; the homophilic interaction enhances receptor signaling. Interacts with TGM2. Interacts with heparin; leading to the reduction of ADGRG1 shedding. Interacts with COL3A1. Part of a GPCR-tetraspanin complex at least consisting of ADGRG1, CD81, eventually CD9, and GNA11 in which CD81 is enhancing the association of ADGRG1 with GNA11. Post-translationally, autoproteolytically cleaved into 2 fragments; the large extracellular N-terminal fragment (ADGRG1 NT) and the membrane-bound C-terminal fragment (ADGRG1 CT) predominantly remain associated and non-covalently linked. Shedding to yield the secreted ADGRG1 N-terminal fragment seems to involve metalloprotease(s). N-glycosylated. Contains sialic acid residues. In terms of processing, ubiquitinated. Undergoes polyubiquitination upon activation. As to expression, widely distributed with highest levels found in thyroid gland, brain and heart. Expressed in a great number of tumor cells. Expression is down-regulated in different tumors from highly metastatic cells.

Its subcellular location is the cell membrane. It localises to the secreted. The protein localises to the membrane raft. Its activity is regulated as follows. Forms a heterodimer of 2 chains generated by proteolytic processing that remain associated through non-covalent interactions mediated by the GAIN-B domain. In the inactivated receptor, the Stachel sequence (also named stalk) is embedded in the GAIN-B domain, where it adopts a beta-strand conformation. On activation, the Stachel moves into the 7 transmembrane region and adopts a twisted hook-shaped configuration that forms contacts within the receptor, leading to coupling of a G-alpha protein, which activates signaling. The cleaved GAIN-B and N-terminal domains can then dissociate from the rest of the receptor. Adhesion G-protein coupled receptor (aGPCR) for steroid hormone 17alpha-hydroxypregnenolone (17-OH), which is involved in cell adhesion and cell-cell interactions. Ligand binding causes a conformation change that triggers signaling via guanine nucleotide-binding proteins (G proteins) and modulates the activity of downstream effectors, such as RhoA pathway. ADGRG1 is coupled to G(12) and/or G(13) G proteins (GNA12 and GNA13, respectively) and mediates the activation Rho small GTPases. Acts as a potent suppressor of ferroptosis: binding to 17-OH-binding initiates signaling that down-regulates CD36 and alleviates ferroptosis-induced liver injury. Ligand-binding also induces cell adhesion activity via association with proteins such as collagen III/COL3A1 and TGM2. Mediates cell matrix adhesion in developing neurons and hematopoietic stem cells. Involved in cortical development, specifically in maintenance of the pial basement membrane integrity and in cortical lamination: association with COL3A1 in the developing brain inhibits neuronal migration via activation of the RhoA pathway. Together with TGM2, acts as a regulator of myelination and myelin repair in oligodendrocyte precursor cells. Acts as a hemostatic sensor of shear force: G protein-coupled receptor signaling is activated in response to shear force in platelets, promoting G(13) G protein signaling, and platelet shape change and aggregation in a COL3A1-dependent manner. Acts as an inhibitor of VEGFA production thereby inhibiting angiogenesis through a signaling pathway mediated by PRKCA. Plays a role in the maintenance of hematopoietic stem cells in bone marrow niche. Plays an essential role in testis development. The chain is Adhesion G-protein coupled receptor G1 from Homo sapiens (Human).